The primary structure comprises 377 residues: tRNA-specific 2-thiouridylase MnmA (377 aa).

ATP is bound by residues Gly-16 to Ser-23 and Met-42. The segment at Asn-102–Asp-104 is interaction with target base in tRNA. Residue Cys-107 is the Nucleophile of the active site. Cys-107 and Cys-204 are oxidised to a cystine. Gly-131 serves as a coordination point for ATP. The interaction with tRNA stretch occupies residues Lys-154–Gln-156. The active-site Cysteine persulfide intermediate is the Cys-204. The segment at Arg-315 to Tyr-316 is interaction with tRNA.

The protein belongs to the MnmA/TRMU family.

It is found in the cytoplasm. It carries out the reaction S-sulfanyl-L-cysteinyl-[protein] + uridine(34) in tRNA + AH2 + ATP = 2-thiouridine(34) in tRNA + L-cysteinyl-[protein] + A + AMP + diphosphate + H(+). Catalyzes the 2-thiolation of uridine at the wobble position (U34) of tRNA, leading to the formation of s(2)U34. This Lacticaseibacillus paracasei (strain ATCC 334 / BCRC 17002 / CCUG 31169 / CIP 107868 / KCTC 3260 / NRRL B-441) (Lactobacillus paracasei) protein is tRNA-specific 2-thiouridylase MnmA.